The following is a 1185-amino-acid chain: Adhesion G-protein coupled receptor G6 (1185 aa).

The first 32 residues, 1–32 (MISFISGRWWRWKFQNTLAVFLLLICLSTSVA), serve as a signal peptide directing secretion. At 33–849 (QSCQSSTSCN…AELIDEKNNR (817 aa)) the chain is on the extracellular side. Cysteines 41 and 67 form a disulfide. Residues 41–149 (CNVVLTDSQG…KGFHISYKQV (109 aa)) enclose the CUB domain. Positions 41 to 354 (CNVVLTDSQG…SSTQTDSTLS (314 aa)) are mediates interaction with type IV collagen. An inhibits receptor signaling in absence of type IV collagen region spans residues 41-839 (CNVVLTDSQG…FGILMDVSRA (799 aa)). N-linked (GlcNAc...) asparagine glycosylation is present at N68. Positions 89 and 97 each coordinate Ca(2+). Cysteines 94 and 111 form a disulfide. N121 carries an N-linked (GlcNAc...) asparagine glycan. Residues D134, S136, and V137 each contribute to the Ca(2+) site. A Pentraxin (PTX) domain is found at 154–355 (RNQKVTMPKS…STQTDSTLSC (202 aa)). 3 disulfides stabilise this stretch: C185-C248, C229-C271, and C369-C375. Residues N395, N429, N470, N539, N550, N562, N565, N613, N680, N691, N719, N763, N799, and N818 are each glycosylated (N-linked (GlcNAc...) asparagine). Disulfide bonds link C508–C544 and C532–C563. The GAIN-B domain maps to 658–840 (PSLTISSKNL…GILMDVSRAA (183 aa)). Disulfide bonds link C790/C822 and C809/C824. The interval 790 to 840 (CVFWDFNLQNYSGGCNSDGCKVGSDSNSNRTVCLCNHLTHFGILMDVSRAA) is GPS. Residues 829–837 (HFGILMDVS) are stachel. Residues 850-870 (VLTFITYIGCGISAIFSAATL) form a helical membrane-spanning segment. Residues 871–886 (LTYIAFEKLRRDYPSK) are Cytoplasmic-facing. Residues 887-907 (ILMNLSTSLLFLNMVFLLDGW) form a helical membrane-spanning segment. Over 908 to 915 (LASYEIKE) the chain is Extracellular. Residues 916-936 (LCVTVAVFLHFFLLTSFTWMG) form a helical membrane-spanning segment. The Cytoplasmic segment spans residues 937–957 (LESIHMYIALVKVFNTYIRRY). The helical transmembrane segment at 958–978 (ILKFCIVGWGVPAAIVGIVLA) threads the bilayer. Residues 979–1013 (VSKDSYGKNYYGKGKDGQGTSEFCWILNPVVFYVT) are Extracellular-facing. A helical membrane pass occupies residues 1014–1034 (CVAYFSIIFLMNVAMFIVVMI). Topologically, residues 1035 to 1057 (QICGRNGKRSNRTLREDILRNLR) are cytoplasmic. The chain crosses the membrane as a helical span at residues 1058–1080 (SVVSLTFLLGMTWGFAFFAWGPV). Topologically, residues 1081–1083 (SLA) are extracellular. A helical membrane pass occupies residues 1084–1106 (FMYLFTIFNSLQGLFIFVFHCAL). N1092 lines the 17alpha-hydroxyprogesterone pocket. Over 1107 to 1185 (KENVQKQWRR…RHSNADSTLQ (79 aa)) the chain is Cytoplasmic. The segment at 1138-1160 (NTKKVSSDNLGKSLSSSSFGSTT) is disordered. Residues 1144-1158 (SDNLGKSLSSSSFGS) show a composition bias toward low complexity.

It belongs to the G-protein coupled receptor 2 family. Adhesion G-protein coupled receptor (ADGR) subfamily. In terms of processing, autoproteolytically processed at the GPS region of the GAIN-B domain; this cleavage modulates receptor activity. As to expression, expressed in Schwann cells of the posterior lateral line nerve and in brain.

Its subcellular location is the cell membrane. Its activity is regulated as follows. Forms a heterodimer of 2 chains generated by proteolytic processing that remain associated through non-covalent interactions mediated by the GAIN-B domain. In the inactivated receptor, the Stachel sequence (also named stalk) is embedded in the GAIN-B domain, where it adopts a beta-strand conformation. On activation, the Stachel moves into the 7 transmembrane region and adopts a twisted hook-shaped configuration that forms contacts within the receptor, leading to coupling of a G-alpha protein, which activates signaling. The cleaved GAIN-B and N-terminal domains can then dissociate from the rest of the receptor. Adhesion G-protein coupled receptor (aGPCR) for steroid hormones, such as progesterone and 17alpha-hydroxyprogesterone (17OHP). Ligand binding causes a conformation change that triggers signaling via guanine nucleotide-binding proteins (G proteins) and modulates the activity of downstream effectors, such as adenylate cyclase. Adgrg6 is coupled to G(i) G alpha proteins and mediates inhibition of adenylate cyclase. Also able to couple to G(q) G proteins. Involved in myelination of the peripheral nervous system: required for differentiation of promyelinating Schwann cells and for normal myelination of axons. G-protein coupled receptor activity can also be activated by type IV collagen, a major constituent of the basement membrane. Also plays a role inner ear development. In Danio rerio (Zebrafish), this protein is Adhesion G-protein coupled receptor G6 (adgrg6).